Here is a 115-residue protein sequence, read N- to C-terminus: Large ribosomal subunit protein bL19 (115 aa).

This sequence belongs to the bacterial ribosomal protein bL19 family.

Its function is as follows. This protein is located at the 30S-50S ribosomal subunit interface and may play a role in the structure and function of the aminoacyl-tRNA binding site. The chain is Large ribosomal subunit protein bL19 from Salmonella choleraesuis (strain SC-B67).